A 439-amino-acid polypeptide reads, in one-letter code: Lipoyl synthase, mitochondrial (439 aa).

Residues 1–37 (MVASARGLRTLHSAHSSISALPASTVPRLQLAVSRCY) constitute a mitochondrion transit peptide. 7 residues coordinate [4Fe-4S] cluster: C150, C155, C161, C181, C185, C188, and S396. A Radical SAM core domain is found at 164–385 (GSSKSAATAT…KERALEMGFL (222 aa)).

It belongs to the radical SAM superfamily. Lipoyl synthase family. Requires [4Fe-4S] cluster as cofactor.

Its subcellular location is the mitochondrion. The catalysed reaction is [[Fe-S] cluster scaffold protein carrying a second [4Fe-4S](2+) cluster] + N(6)-octanoyl-L-lysyl-[protein] + 2 oxidized [2Fe-2S]-[ferredoxin] + 2 S-adenosyl-L-methionine + 4 H(+) = [[Fe-S] cluster scaffold protein] + N(6)-[(R)-dihydrolipoyl]-L-lysyl-[protein] + 4 Fe(3+) + 2 hydrogen sulfide + 2 5'-deoxyadenosine + 2 L-methionine + 2 reduced [2Fe-2S]-[ferredoxin]. The protein operates within protein modification; protein lipoylation via endogenous pathway; protein N(6)-(lipoyl)lysine from octanoyl-[acyl-carrier-protein]: step 2/2. In terms of biological role, catalyzes the radical-mediated insertion of two sulfur atoms into the C-6 and C-8 positions of the octanoyl moiety bound to the lipoyl domains of lipoate-dependent enzymes, thereby converting the octanoylated domains into lipoylated derivatives. The polypeptide is Lipoyl synthase, mitochondrial (Paracoccidioides lutzii (strain ATCC MYA-826 / Pb01) (Paracoccidioides brasiliensis)).